We begin with the raw amino-acid sequence, 167 residues long: MAEIMADSELAPKFAPFIGMAGIAAAMIFGSAGAAYGTAKSGIGIAGVGTFRPDLIMKCLIPVVMSGIIAVYALVVAVLIAQDLGPPGSGQHYSLFNGFMHLACGLSVGLTGLAAGYCIGIVGDKGVRSFMLQSRIFVGMVLILIFGEVLGLYGLIVALILNTKSKG.

At 1–13 the chain is on the lumenal side; that stretch reads MAEIMADSELAPK. The chain crosses the membrane as a helical span at residues 14 to 34; it reads FAPFIGMAGIAAAMIFGSAGA. Over 35–59 the chain is Cytoplasmic; sequence AYGTAKSGIGIAGVGTFRPDLIMKC. A helical membrane pass occupies residues 60–80; that stretch reads LIPVVMSGIIAVYALVVAVLI. The Lumenal portion of the chain corresponds to 81–101; the sequence is AQDLGPPGSGQHYSLFNGFMH. The helical transmembrane segment at 102–122 threads the bilayer; that stretch reads LACGLSVGLTGLAAGYCIGIV. Residues 123-140 are Cytoplasmic-facing; the sequence is GDKGVRSFMLQSRIFVGM. The chain crosses the membrane as a helical span at residues 141–161; that stretch reads VLILIFGEVLGLYGLIVALIL. Topologically, residues 162 to 167 are lumenal; that stretch reads NTKSKG.

It belongs to the V-ATPase proteolipid subunit family. In terms of assembly, V-ATPase is a heteromultimeric enzyme composed of a peripheral catalytic V1 complex (components A to H) attached to an integral membrane V0 proton pore complex (components: a, c, c', c'', d, e, f and VOA1). The decameric c-ring forms the proton-conducting pore, and is composed of eight proteolipid subunits c, one subunit c' and one subunit c''.

It localises to the vacuole membrane. Its function is as follows. Proton-conducting pore forming subunit of the V0 complex of vacuolar(H+)-ATPase (V-ATPase), a multisubunit enzyme composed of a peripheral complex (V1) that hydrolyzes ATP and a membrane integral complex (V0) that translocates protons. V-ATPase is responsible for acidifying and maintaining the pH of intracellular compartments. In Neurospora crassa (strain ATCC 24698 / 74-OR23-1A / CBS 708.71 / DSM 1257 / FGSC 987), this protein is V-type proton ATPase subunit c' (vma-11).